The primary structure comprises 31 residues: Cyclotide vpub-A (31 aa).

The cyclopeptide (Gly-Asn) cross-link spans 1–31 (GVIPCGESCVFIPCISAVIGCSCKSKVCYRN). Disulfide bonds link C5–C21, C9–C23, and C14–C28.

Belongs to the cyclotide family. Bracelet subfamily. In terms of processing, this is a cyclic peptide.

In terms of biological role, probably participates in a plant defense mechanism. This chain is Cyclotide vpub-A, found in Viola pubescens (Downy yellow violet).